Consider the following 850-residue polypeptide: Lon protease (850 aa).

One can recognise a Lon N-terminal domain in the interval 38 to 232 (LPVLPLRDVV…LLVGLVDGEI (195 aa)). 384-391 (GPPGVGKT) provides a ligand contact to ATP. The Lon proteolytic domain maps to 634–815 (ENEIGLVTGL…DEVLDLALER (182 aa)). Active-site residues include S721 and K764. A disordered region spans residues 819-850 (PKKAGKEKARKTAPRVAVRGKSRSTPGTRVKH). Residues 821 to 840 (KAGKEKARKTAPRVAVRGKS) show a composition bias toward basic residues. A compositionally biased stretch (polar residues) spans 841-850 (RSTPGTRVKH).

The protein belongs to the peptidase S16 family. In terms of assembly, homohexamer. Organized in a ring with a central cavity.

It is found in the cytoplasm. It catalyses the reaction Hydrolysis of proteins in presence of ATP.. Functionally, ATP-dependent serine protease that mediates the selective degradation of mutant and abnormal proteins as well as certain short-lived regulatory proteins. Required for cellular homeostasis and for survival from DNA damage and developmental changes induced by stress. Degrades polypeptides processively to yield small peptide fragments that are 5 to 10 amino acids long. Binds to DNA in a double-stranded, site-specific manner. This chain is Lon protease, found in Xanthomonas oryzae pv. oryzae (strain KACC10331 / KXO85).